A 395-amino-acid polypeptide reads, in one-letter code: Small RNA 2'-O-methyltransferase (395 aa).

Asp79 and Ser115 together coordinate S-adenosyl-L-methionine. The Mg(2+) site is built by Glu133, Glu136, His137, and His182.

It belongs to the methyltransferase superfamily. HEN1 family. Mg(2+) is required as a cofactor. As to expression, specifically expressed in testis.

It is found in the cytoplasm. It carries out the reaction small RNA 3'-end nucleotide + S-adenosyl-L-methionine = small RNA 3'-end 2'-O-methylnucleotide + S-adenosyl-L-homocysteine + H(+). Its function is as follows. Methyltransferase that adds a 2'-O-methyl group at the 3'-end of piRNAs, a class of 24 to 30 nucleotide RNAs that are generated by a Dicer-independent mechanism and are primarily derived from transposons and other repeated sequence elements. This probably protects the 3'-end of piRNAs from uridylation activity and subsequent degradation. Stabilization of piRNAs is essential for gametogenesis. The protein is Small RNA 2'-O-methyltransferase (Henmt1) of Mus musculus (Mouse).